Consider the following 259-residue polypeptide: Bisphosphoglycerate mutase (259 aa).

An N-acetylserine modification is found at Ser2. Residues 10 to 17, 23 to 24, Arg62, 89 to 92, Arg100, and 116 to 117 each bind substrate; these read RHGEGAWN, CS, ERHY, and RR. His11 acts as the Tele-phosphohistidine intermediate in catalysis. Catalysis depends on Glu89, which acts as the Proton donor/acceptor. Position 122 is a phosphothreonine (Thr122). 189 to 190 is a binding site for substrate; the sequence is GN.

It belongs to the phosphoglycerate mutase family. BPG-dependent PGAM subfamily. Homodimer.

It catalyses the reaction (2R)-3-phospho-glyceroyl phosphate = (2R)-2,3-bisphosphoglycerate + H(+). It carries out the reaction (2R)-2-phosphoglycerate = (2R)-3-phosphoglycerate. With respect to regulation, at alkaline pH BPGM favors the synthase reaction; however, at lower pH the phosphatase reaction is dominant. Inhibited by citrate. Functionally, plays a major role in regulating hemoglobin oxygen affinity by controlling the levels of its allosteric effector 2,3-bisphosphoglycerate (2,3-BPG). Also exhibits mutase (EC 5.4.2.11) activity. The sequence is that of Bisphosphoglycerate mutase (BPGM) from Macaca fascicularis (Crab-eating macaque).